The following is a 740-amino-acid chain: Gramillins biosynthetic cluster protein FGSG_11657 (740 aa).

Disordered regions lie at residues 353-391 (QADSPVPLSSVKEESGLGKLARSPAEPAPSRPLPGSSIP), 414-434 (SKLSDEAEADTSIKPDSDAAS), 514-535 (PKEQEEPKRHRTSNNSIVGSSD), and 656-686 (EHEGEGRADTNRHVSTQSNMPTEQSLLPQGD). A compositionally biased stretch (basic and acidic residues) spans 656 to 667 (EHEGEGRADTNR). Polar residues predominate over residues 668-682 (HVSTQSNMPTEQSLL).

It functions in the pathway mycotoxin biosynthesis. Part of the gene cluster that mediates the biosynthesis of gramillins A and B, bicyclic lipopeptides that induce cell death in maize leaves but not in wheat leaves. The nonribosomal peptide synthetase GRA1 incorporates respectively a glutamic adic (Glu), a leucine (Leu), a serine (Ser), a hydroxyglutamine (HOGln), a 2-amino decanoic acid, and 2 cysteins (CysB and CysA). The biosynthesis of 2-amino decanoic acid incorporated in gramillins could be initiated by a fatty acid synthase composed of the alpha and beta subunits FGSG_00036 and FGSG_11656. The cytochrome P450 monooxygenase FGSG_15680 could hydroxylate the fatty acid chain. Subsequent oxidation to the ketone by the oxidoreductase FGSG_00048 and transamination by aminotransferase FGSG_00049 could form 2-amino-decanoic acid. On the other hand, FGSG_15680 could also be responsible for the HO-modified glutamine at the gamma-position. Whether hydroxylation occurs on the fully assembled product or on the Gln residue prior to assembly into the gramillins requires further proof. The thioredoxin FGSG_00043 could also be required for the disulfide-bond formation between CysA and CysB. The specific involvement of the remaining proteins from the cluster is more difficult to discern, but could have broader regulatory (FGSG_00040 and FGSG_11657) or enzymatic functions (FGSG_00044 and FGSG_00045). The final C-domain of GRA1 does not possess the expected sequence of a termination CT domain, often implicated in macrocyclization and release of a cyclopeptidein fungal NRPs; and the thioesterase FGSG_00047 may act in concert with the terminal C-domain of GRA1 to catalyze the formation of the macrocyclic anhydride and release of the products. The protein is Gramillins biosynthetic cluster protein FGSG_11657 of Gibberella zeae (strain ATCC MYA-4620 / CBS 123657 / FGSC 9075 / NRRL 31084 / PH-1) (Wheat head blight fungus).